Reading from the N-terminus, the 306-residue chain is Elongation factor Ts (306 aa).

The tract at residues T80–V83 is involved in Mg(2+) ion dislocation from EF-Tu.

The protein belongs to the EF-Ts family.

Its subcellular location is the cytoplasm. Associates with the EF-Tu.GDP complex and induces the exchange of GDP to GTP. It remains bound to the aminoacyl-tRNA.EF-Tu.GTP complex up to the GTP hydrolysis stage on the ribosome. The protein is Elongation factor Ts of Methylorubrum extorquens (strain CM4 / NCIMB 13688) (Methylobacterium extorquens).